The chain runs to 209 residues: High frequency lysogenization protein HflD homolog (209 aa).

The protein belongs to the HflD family.

It is found in the cytoplasm. The protein localises to the cell inner membrane. This Marinomonas sp. (strain MWYL1) protein is High frequency lysogenization protein HflD homolog.